The sequence spans 275 residues: Large ribosomal subunit protein uL2cz (275 aa).

2 disordered regions span residues 1-20 (MAIH…AVDS) and 225-275 (NPVD…RRSK).

Belongs to the universal ribosomal protein uL2 family. As to quaternary structure, part of the 50S ribosomal subunit.

Its subcellular location is the plastid. The protein localises to the chloroplast. This is Large ribosomal subunit protein uL2cz (rpl2-A) from Populus alba (White poplar).